A 308-amino-acid chain; its full sequence is 1,4-dihydroxy-2-naphthoate octaprenyltransferase (308 aa).

9 helical membrane passes run 22 to 42, 47 to 67, 101 to 121, 129 to 149, 153 to 173, 186 to 206, 235 to 255, 256 to 276, and 286 to 306; these read TLPLALASIFTGSALGYWANP, GLVMVLCLLTTILLQVLSNFA, WGLILMVMASFLSGSFLIGIA, FAFAGLGILAIVAAITYTVGV, GYMGLGDISVLVFFGLLGVGG, IILPAIGSGLLASAVLNINNL, ILLSVAALCYLAFAVATAISW, TNYLFVLAMPLLAKHAIFVYC, and ILAQMSMISLLINILFSLGLL.

It belongs to the MenA family. Type 1 subfamily.

Its subcellular location is the cell inner membrane. The catalysed reaction is an all-trans-polyprenyl diphosphate + 1,4-dihydroxy-2-naphthoate + H(+) = a 2-demethylmenaquinol + CO2 + diphosphate. It participates in quinol/quinone metabolism; menaquinone biosynthesis; menaquinol from 1,4-dihydroxy-2-naphthoate: step 1/2. Conversion of 1,4-dihydroxy-2-naphthoate (DHNA) to demethylmenaquinone (DMK). The chain is 1,4-dihydroxy-2-naphthoate octaprenyltransferase from Haemophilus influenzae (strain ATCC 51907 / DSM 11121 / KW20 / Rd).